Here is a 711-residue protein sequence, read N- to C-terminus: Dendrin (711 aa).

4 disordered regions span residues 1–22 (MLDG…DEES), 49–273 (APSR…KKRL), 324–446 (DLNS…SQGL), and 479–677 (PSGV…AELS). Residues 75–84 (PGSPQPPPRR) are compositionally biased toward pro residues. Residues 102-134 (LAEVRAREQEKRKAASQEREAKETERKRRKAGG) are a coiled coil. Residues 105–127 (VRAREQEKRKAASQEREAKETER) are compositionally biased toward basic and acidic residues. The tract at residues 113-131 (RKAASQEREAKETERKRRK) is nuclear localization. The span at 150–161 (APRVAQLAGLPA) shows a compositional bias: low complexity. The interval 186 to 236 (GSAWAGPWGGRRPGPPSYEAHLLLRGSAGTAPRRRWDRPPPYVAPPSYEGP) is interaction with MAGI2. Low complexity-rich tracts occupy residues 252–262 (PTSSAPAATPA) and 346–356 (APAGSATAAPC). An interaction with ACTN1 region spans residues 341-436 (AGTEIAPAGS…LEGWKATRRA (96 aa)). Residue Ser389 is modified to Phosphoserine. An interaction with CD2AP and NPHS1 region spans residues 408–709 (GGTGWRESLG…IRGTQQGNRK (302 aa)). A compositionally biased stretch (basic and acidic residues) spans 529–546 (GEAEGGRPGDSTLEERTF).

Forms a ternary complex with MAGI2 and SH3KBP1; recruits DDN to the cytoplasm. Interacts with MAGI1. Interacts with ACTN1 and may interact with WWC1. Interacts with the podocyte slit diaphragm proteins CD2AP, NPHS1 and NPHS2; the interaction with CD2AP and NPHS1 is direct. Specifically expressed in brain and kidney. Expressed in kidney glomerular capillary loops (at protein level).

It localises to the cell projection. Its subcellular location is the dendritic spine membrane. The protein localises to the cytoplasm. The protein resides in the endoplasmic reticulum membrane. It is found in the perikaryon. It localises to the nucleus. Promotes apoptosis of kidney glomerular podocytes. Podocytes are highly specialized cells essential to the ultrafiltration of blood, resulting in the extraction of urine and the retention of protein. This chain is Dendrin (DDN), found in Homo sapiens (Human).